We begin with the raw amino-acid sequence, 127 residues long: Large ribosomal subunit protein bL12 (127 aa).

The protein belongs to the bacterial ribosomal protein bL12 family. As to quaternary structure, homodimer. Part of the ribosomal stalk of the 50S ribosomal subunit. Forms a multimeric L10(L12)X complex, where L10 forms an elongated spine to which 2 to 4 L12 dimers bind in a sequential fashion. Binds GTP-bound translation factors.

Its function is as follows. Forms part of the ribosomal stalk which helps the ribosome interact with GTP-bound translation factors. Is thus essential for accurate translation. The sequence is that of Large ribosomal subunit protein bL12 from Thiobacillus denitrificans (strain ATCC 25259 / T1).